The primary structure comprises 441 residues: Tol-Pal system protein TolB (441 aa).

Positions 1 to 39 (MPAMTPAFRRADLTGFLRTYGAALILLLAAMLAWQPAQA) are cleaved as a signal peptide.

It belongs to the TolB family. As to quaternary structure, the Tol-Pal system is composed of five core proteins: the inner membrane proteins TolA, TolQ and TolR, the periplasmic protein TolB and the outer membrane protein Pal. They form a network linking the inner and outer membranes and the peptidoglycan layer.

Its subcellular location is the periplasm. In terms of biological role, part of the Tol-Pal system, which plays a role in outer membrane invagination during cell division and is important for maintaining outer membrane integrity. This Bordetella bronchiseptica (strain ATCC BAA-588 / NCTC 13252 / RB50) (Alcaligenes bronchisepticus) protein is Tol-Pal system protein TolB.